We begin with the raw amino-acid sequence, 336 residues long: Aspartate--ammonia ligase (336 aa).

The protein belongs to the class-II aminoacyl-tRNA synthetase family. AsnA subfamily.

Its subcellular location is the cytoplasm. It catalyses the reaction L-aspartate + NH4(+) + ATP = L-asparagine + AMP + diphosphate + H(+). It functions in the pathway amino-acid biosynthesis; L-asparagine biosynthesis; L-asparagine from L-aspartate (ammonia route): step 1/1. This is Aspartate--ammonia ligase from Ligilactobacillus salivarius (strain UCC118) (Lactobacillus salivarius).